The following is a 444-amino-acid chain: Tubulin beta chain (444 aa).

Residues Gln11, Glu68, Ser137, Gly141, Thr142, Gly143, Asn203, and Asn225 each coordinate GTP. Position 68 (Glu68) interacts with Mg(2+). The interval 424-444 (QDATAEEEGEFDEDEEMDEMM) is disordered. A compositionally biased stretch (acidic residues) spans 427-444 (TAEEEGEFDEDEEMDEMM).

It belongs to the tubulin family. Dimer of alpha and beta chains. A typical microtubule is a hollow water-filled tube with an outer diameter of 25 nm and an inner diameter of 15 nM. Alpha-beta heterodimers associate head-to-tail to form protofilaments running lengthwise along the microtubule wall with the beta-tubulin subunit facing the microtubule plus end conferring a structural polarity. Microtubules usually have 13 protofilaments but different protofilament numbers can be found in some organisms and specialized cells. It depends on Mg(2+) as a cofactor.

It localises to the cytoplasm. It is found in the cytoskeleton. Its function is as follows. Tubulin is the major constituent of microtubules, a cylinder consisting of laterally associated linear protofilaments composed of alpha- and beta-tubulin heterodimers. Microtubules grow by the addition of GTP-tubulin dimers to the microtubule end, where a stabilizing cap forms. Below the cap, tubulin dimers are in GDP-bound state, owing to GTPase activity of alpha-tubulin. The polypeptide is Tubulin beta chain (Achlya klebsiana).